Reading from the N-terminus, the 236-residue chain is Phosphoribosylaminoimidazole-succinocarboxamide synthase (236 aa).

It belongs to the SAICAR synthetase family.

It carries out the reaction 5-amino-1-(5-phospho-D-ribosyl)imidazole-4-carboxylate + L-aspartate + ATP = (2S)-2-[5-amino-1-(5-phospho-beta-D-ribosyl)imidazole-4-carboxamido]succinate + ADP + phosphate + 2 H(+). It functions in the pathway purine metabolism; IMP biosynthesis via de novo pathway; 5-amino-1-(5-phospho-D-ribosyl)imidazole-4-carboxamide from 5-amino-1-(5-phospho-D-ribosyl)imidazole-4-carboxylate: step 1/2. This is Phosphoribosylaminoimidazole-succinocarboxamide synthase from Pseudomonas aeruginosa (strain LESB58).